Here is a 409-residue protein sequence, read N- to C-terminus: MVIRSLLQCRTWSKSDWLLASIGIVLIVYSFSLSFNSTSDSIPSVDRSDLVKLKLSSKAKERGAFCLDGSLPGYHFHKGSGSGSNSWLLYLEGGGGCRTIESCSARAMTRLGSSNFFEHEVPFFGVLSSDPSQNPDFFNWNRVMIRYCDGACFSGHPEAEFKNETRLFFRGQLIWEAIMDELLSMGMSHAKRAMLTGCSAGGLSTLIHCDYFRDHLPKDATVKCVSDGGYILNVLDVLGNPTMGSFFHDVVTLQSVDKSLDQNCVAKMEPSKCMFPQESLKNIRTPVFLVNTAYDYWQIQNGLVPDSPDLDERWKICRLNIQECDAAQMKVLHGFRSSLIDAIGEFHVNKEGGMFINSCNSHCQIRESWHSATSTRIENKTIAESVGDWYFNRKPVKLIDCPYPCNASC.

Positions 1–32 are cleaved as a signal peptide; the sequence is MVIRSLLQCRTWSKSDWLLASIGIVLIVYSFS. 2 N-linked (GlcNAc...) asparagine glycosylation sites follow: Asn36 and Asn163. Catalysis depends on charge relay system residues Ser199, Asp295, and His362. N-linked (GlcNAc...) asparagine glycosylation is found at Asn379 and Asn406.

Belongs to the pectinacetylesterase family.

The protein resides in the secreted. It is found in the cell wall. Its function is as follows. Hydrolyzes acetyl esters in homogalacturonan regions of pectin. In type I primary cell wall, galacturonic acid residues of pectin can be acetylated at the O-2 and O-3 positions. Decreasing the degree of acetylation of pectin gels in vitro alters their physical properties. This Arabidopsis thaliana (Mouse-ear cress) protein is Pectin acetylesterase 4.